A 256-amino-acid polypeptide reads, in one-letter code: MAKGGKSPKGKKITLNVAKNCIKITFDGRKRLDLSKMGITTFPKCILRLNEIDELDLSRNMIRKIPDSISKFQNLRWLDLHSNYIDKLPESIGQMTSLLFLNVSNNRLTTNGLPVELNQLKNIRTVNLGLNHLDSVPTTLGALKELHEVGLHDNLLTSIPAGISKLPKLKKLNVKRNPFPKPDESDMFVDSIKRLENLYLVEEKDLCSSCLQKCQQARDKLNKIRSMAPSAPRKAIFSNLVSPNSTAKESQEEWSV.

LRR repeat units follow at residues 28 to 49 (GRKRLDLSKMGITTFPKCILRL), 51 to 72 (EIDELDLSRNMIRKIPDSISKF), 74 to 95 (NLRWLDLHSNYIDKLPESIGQM), 97 to 118 (SLLFLNVSNNRLTTNGLPVELN), 122 to 144 (NIRTVNLGLNHLDSVPTTLGALK), 145 to 167 (ELHEVGLHDNLLTSIPAGISKLP), 168 to 189 (KLKKLNVKRNPFPKPDESDMFV), and 194 to 215 (RLENLYLVEEKDLCSSCLQKCQ).

The protein localises to the cytoplasm. Functionally, may be involved in the regulation of spermatogenesis and sperm maturation. The polypeptide is Leucine-rich repeat-containing protein 18 (Lrrc18) (Rattus norvegicus (Rat)).